An 84-amino-acid chain; its full sequence is Large ribosomal subunit protein bL27 (84 aa).

The interval M1–G22 is disordered.

Belongs to the bacterial ribosomal protein bL27 family.

This is Large ribosomal subunit protein bL27 from Shewanella denitrificans (strain OS217 / ATCC BAA-1090 / DSM 15013).